Here is a 268-residue protein sequence, read N- to C-terminus: Tryptophan synthase alpha chain (268 aa).

Residues Glu-49 and Asp-60 each act as proton acceptor in the active site.

This sequence belongs to the TrpA family. As to quaternary structure, tetramer of two alpha and two beta chains.

The enzyme catalyses (1S,2R)-1-C-(indol-3-yl)glycerol 3-phosphate + L-serine = D-glyceraldehyde 3-phosphate + L-tryptophan + H2O. Its pathway is amino-acid biosynthesis; L-tryptophan biosynthesis; L-tryptophan from chorismate: step 5/5. Functionally, the alpha subunit is responsible for the aldol cleavage of indoleglycerol phosphate to indole and glyceraldehyde 3-phosphate. This is Tryptophan synthase alpha chain from Vibrio vulnificus (strain YJ016).